Consider the following 213-residue polypeptide: Signal recognition particle sec65 subunit (213 aa).

Positions 176-213 (MAALAGMGGPAPPMPTPQASSSQRKQKSIEPEYDLDLE) are disordered.

It belongs to the SRP19 family. As to quaternary structure, fungal signal recognition particle consists of a 7S RNA molecule (scR1) and at least six protein subunits: srp72, srp68, srp54, sec65, srp21 and srp14.

The protein localises to the cytoplasm. It localises to the nucleus. Its function is as follows. Signal-recognition-particle assembly has a crucial role in targeting secretory proteins to the rough endoplasmic reticulum membrane. It must be involved intimately in the translocation of a wide variety of protein substrates. In Schizosaccharomyces pombe (strain 972 / ATCC 24843) (Fission yeast), this protein is Signal recognition particle sec65 subunit (sec65).